The following is a 390-amino-acid chain: Probable inactive secreted aspartyl protease (390 aa).

An N-terminal signal peptide occupies residues 1–20 (MQLTIKALVGILTTISAATA). A propeptide spans 21 to 69 (VSFDMENLGAEKRGVSGEELHMLHGNEVLARFANGVYPEVANGTRVSKR) (removed in mature form). An N-linked (GlcNAc...) asparagine glycan is attached at Asn-62. One can recognise a Peptidase A1 domain in the interval 86-388 (WAVKAKIGSN…KFDSNEMQIA (303 aa)). Active-site residues include Asp-104 and Asp-273. Residues Cys-313 and Cys-346 are joined by a disulfide bond.

This sequence belongs to the peptidase A1 family.

The protein localises to the secreted. In terms of biological role, probable inactive secreted aspartyl protease. May promote an inflammatory immune response in the host when the host skin barrier is breached. Has no detectable protease activity in vitro on fluorogenic substrates, a peptide library, or with the general protease substrate casein. The presence of the enzyme also does not affect the activity of the secreted aspartyl protease SAP1. This chain is Probable inactive secreted aspartyl protease, found in Malassezia globosa (strain ATCC MYA-4612 / CBS 7966) (Dandruff-associated fungus).